The primary structure comprises 293 residues: Ribosomal protein L11 methyltransferase (293 aa).

S-adenosyl-L-methionine is bound by residues Thr145, Gly166, Asp188, and Asn230.

It belongs to the methyltransferase superfamily. PrmA family.

The protein localises to the cytoplasm. It catalyses the reaction L-lysyl-[protein] + 3 S-adenosyl-L-methionine = N(6),N(6),N(6)-trimethyl-L-lysyl-[protein] + 3 S-adenosyl-L-homocysteine + 3 H(+). Methylates ribosomal protein L11. In Salmonella newport (strain SL254), this protein is Ribosomal protein L11 methyltransferase.